The chain runs to 96 residues: Co-chaperonin GroES (96 aa).

Belongs to the GroES chaperonin family. In terms of assembly, heptamer of 7 subunits arranged in a ring. Interacts with the chaperonin GroEL.

The protein localises to the cytoplasm. Functionally, together with the chaperonin GroEL, plays an essential role in assisting protein folding. The GroEL-GroES system forms a nano-cage that allows encapsulation of the non-native substrate proteins and provides a physical environment optimized to promote and accelerate protein folding. GroES binds to the apical surface of the GroEL ring, thereby capping the opening of the GroEL channel. The sequence is that of Co-chaperonin GroES from Teredinibacter turnerae (strain ATCC 39867 / T7901).